A 166-amino-acid chain; its full sequence is MKYTSSFLALLLCVLLGFSGSYGQGPFFKEIENLKEYFNASNPDVAKGGPLFSEILKNWKEESDKKIIQSQIVSFYFKLFENLKDNQVIQRSMDIIKQDMFQKFLNGSSEKLEDFKRLIQIPVDDLQIQRKAINELIKVMNDLSPKSNLRKRKRSQNLFRGRRASM.

Positions 1-23 are cleaved as a signal peptide; the sequence is MKYTSSFLALLLCVLLGFSGSYG. Glutamine 24 carries the post-translational modification Pyrrolidone carboxylic acid. Asparagine 39 and asparagine 106 each carry an N-linked (GlcNAc...) asparagine glycan.

It belongs to the type II (or gamma) interferon family. As to quaternary structure, homodimer. Interacts with IFNGR1 (via extracellular domain); this interaction promotes IFNGR1 dimerization. Released primarily from activated T lymphocytes.

The protein localises to the secreted. Its function is as follows. Type II interferon produced by immune cells such as T-cells and NK cells that plays crucial roles in antimicrobial, antiviral, and antitumor responses by activating effector immune cells and enhancing antigen presentation. Primarily signals through the JAK-STAT pathway after interaction with its receptor IFNGR1 to affect gene regulation. Upon IFNG binding, IFNGR1 intracellular domain opens out to allow association of downstream signaling components JAK2, JAK1 and STAT1, leading to STAT1 activation, nuclear translocation and transcription of IFNG-regulated genes. Many of the induced genes are transcription factors such as IRF1 that are able to further drive regulation of a next wave of transcription. Plays a role in class I antigen presentation pathway by inducing a replacement of catalytic proteasome subunits with immunoproteasome subunits. In turn, increases the quantity, quality, and repertoire of peptides for class I MHC loading. Increases the efficiency of peptide generation also by inducing the expression of activator PA28 that associates with the proteasome and alters its proteolytic cleavage preference. Up-regulates as well MHC II complexes on the cell surface by promoting expression of several key molecules such as cathepsins B/CTSB, H/CTSH, and L/CTSL. Participates in the regulation of hematopoietic stem cells during development and under homeostatic conditions by affecting their development, quiescence, and differentiation. The polypeptide is Interferon gamma (IFNG) (Ovis aries (Sheep)).